The primary structure comprises 315 residues: MDVLLSLPQPELFKTTVIPFLANRNIIKSEAILSNLHSIFYVAIFYHIWFLFGKWILFPHLVKWKLDYDQKHNVKKDEKTTSERQAQHYKKKYTSLINQSSVHLISLLQSIVVLYYSLKFLLDPKASAEPYQTSHSRVFTENRDTQVICIFAIGYFVWDIYISTMYSTFPFVVHGIISTVVFCIGLKPYIQYYAPVFLMFELSNPSLNFRWFGIKFLPQKSKFCSLLLLLNNLTLMVVFFAARIAWGWFQIGKLCYDFYQVRNEPGFLVFDTIVILAGNFVLDILNVIWFSTMVSVAAKVLKKGESVDKVTKNEQ.

The Cytoplasmic portion of the chain corresponds to 1-38 (MDVLLSLPQPELFKTTVIPFLANRNIIKSEAILSNLHS). Residues 39 to 59 (IFYVAIFYHIWFLFGKWILFP) traverse the membrane as a helical segment. The Lumenal segment spans residues 60–101 (HLVKWKLDYDQKHNVKKDEKTTSERQAQHYKKKYTSLINQSS). The TLC domain occupies 95-302 (SLINQSSVHL…MVSVAAKVLK (208 aa)). A helical membrane pass occupies residues 102–122 (VHLISLLQSIVVLYYSLKFLL). Residues 123-144 (DPKASAEPYQTSHSRVFTENRD) lie on the Cytoplasmic side of the membrane. A helical membrane pass occupies residues 145–165 (TQVICIFAIGYFVWDIYISTM). The Lumenal portion of the chain corresponds to 166–170 (YSTFP). The helical transmembrane segment at 171-190 (FVVHGIISTVVFCIGLKPYI) threads the bilayer. The Cytoplasmic portion of the chain corresponds to 191–225 (QYYAPVFLMFELSNPSLNFRWFGIKFLPQKSKFCS). The chain crosses the membrane as a helical span at residues 226 to 246 (LLLLLNNLTLMVVFFAARIAW). Residues 247 to 264 (GWFQIGKLCYDFYQVRNE) lie on the Lumenal side of the membrane. A helical transmembrane segment spans residues 265 to 285 (PGFLVFDTIVILAGNFVLDIL). At 286–315 (NVIWFSTMVSVAAKVLKKGESVDKVTKNEQ) the chain is on the cytoplasmic side.

It localises to the endoplasmic reticulum membrane. This is an uncharacterized protein from Saccharomyces cerevisiae (strain ATCC 204508 / S288c) (Baker's yeast).